The chain runs to 826 residues: Copper-transporting ATPase 1 (826 aa).

HMA domains lie at 15 to 80 and 82 to 147; these read APTD…YEPK and IIQE…YDVR. Cu cation contacts are provided by cysteine 26, cysteine 29, cysteine 93, and cysteine 96. Helical transmembrane passes span 172–192, 209–229, 246–266, 270–290, 429–449, and 457–477; these read LVIL…GSHF, NLYI…LRFF, LVVL…FASG, SGTA…ILLG, AWFV…WYVF, and FALV…MGLA. The 4-aspartylphosphate intermediate role is filled by aspartate 514. Mg(2+) contacts are provided by aspartate 713 and aspartate 717. 2 helical membrane passes run 772 to 792 and 795 to 815; these read FWAF…LYPL and TLLS…FVLG.

The protein belongs to the cation transport ATPase (P-type) (TC 3.A.3) family. Type IB subfamily.

It localises to the cell membrane. The enzyme catalyses Cu(2+)(in) + ATP + H2O = Cu(2+)(out) + ADP + phosphate + H(+). Functionally, involved in copper transport. This Rhizobium meliloti (strain 1021) (Ensifer meliloti) protein is Copper-transporting ATPase 1 (actP1).